Reading from the N-terminus, the 590-residue chain is Phosphatidylserine decarboxylase proenzyme 1, mitochondrial (590 aa).

Residues 1-59 (MPLKPISFRWSKTSVRSVPNPFMYGPDNLNKPLSRASQMAERVHQQTPSSTNYQQRRYF) constitute a mitochondrion transit peptide. Over 60-140 (SYYYYQFPKI…GKERRRFIRW (81 aa)) the chain is Mitochondrial matrix. The chain crosses the membrane as a helical span at residues 141 to 159 (WTVTSLTIVLGGVYAKIKY). Over 160-590 (ERGDHEENPY…KVGQSLGGFV (431 aa)) the chain is Mitochondrial intermembrane. Catalysis depends on charge relay system; for autoendoproteolytic cleavage activity residues Asp260, His403, and Ser558. Catalysis depends on Ser558, which acts as the Schiff-base intermediate with substrate; via pyruvic acid; for decarboxylase activity. Ser558 is modified (pyruvic acid (Ser); by autocatalysis).

Belongs to the phosphatidylserine decarboxylase family. PSD-B subfamily. Eukaryotic type I sub-subfamily. In terms of assembly, heterodimer of a large membrane-associated beta subunit and a small pyruvoyl-containing alpha subunit. The cofactor is pyruvate. Post-translationally, is synthesized initially as an inactive proenzyme. Formation of the active enzyme involves a self-maturation process in which the active site pyruvoyl group is generated from an internal serine residue via an autocatalytic post-translational modification. Two non-identical subunits are generated from the proenzyme in this reaction, and the pyruvate is formed at the N-terminus of the alpha chain, which is derived from the carboxyl end of the proenzyme. The autoendoproteolytic cleavage occurs by a canonical serine protease mechanism, in which the side chain hydroxyl group of the serine supplies its oxygen atom to form the C-terminus of the beta chain, while the remainder of the serine residue undergoes an oxidative deamination to produce ammonia and the pyruvoyl prosthetic group on the alpha chain. During this reaction, the Ser that is part of the protease active site of the proenzyme becomes the pyruvoyl prosthetic group, which constitutes an essential element of the active site of the mature decarboxylase.

The protein resides in the mitochondrion inner membrane. It carries out the reaction a 1,2-diacyl-sn-glycero-3-phospho-L-serine + H(+) = a 1,2-diacyl-sn-glycero-3-phosphoethanolamine + CO2. The protein operates within phospholipid metabolism; phosphatidylethanolamine biosynthesis; phosphatidylethanolamine from CDP-diacylglycerol: step 2/2. Functionally, catalyzes the formation of phosphatidylethanolamine (PtdEtn) from phosphatidylserine (PtdSer). Plays a central role in phospholipid metabolism and in the interorganelle trafficking of phosphatidylserine. Important for virulence. This is Phosphatidylserine decarboxylase proenzyme 1, mitochondrial from Candida albicans (strain SC5314 / ATCC MYA-2876) (Yeast).